The following is a 432-amino-acid chain: 7-dehydrocholesterol reductase (432 aa).

The next 9 membrane-spanning stretches (helical) occupy residues 12–34, 64–86, 107–126, 136–155, 195–212, 227–249, 261–283, 287–309, and 371–393; these read YASM…YTMV, LIAW…LLPG, LAAY…FGIF, GEIF…LLYI, FTNC…AVTY, MLVN…AGYW, FYIC…MYLV, VELG…YINY, and SAFF…VIFL.

This sequence belongs to the ERG4/ERG24 family.

Its subcellular location is the endoplasmic reticulum membrane. It carries out the reaction cholesterol + NADP(+) = 7-dehydrocholesterol + NADPH + H(+). Its pathway is lipid metabolism; steroid biosynthesis. Production of cholesterol by reduction of C7-C8 double bond of 7-dehydrocholesterol (7-DHC). Lesions in the gene coding for the enzyme cause dwarfism. The protein is 7-dehydrocholesterol reductase (DWF5) of Arabidopsis thaliana (Mouse-ear cress).